Reading from the N-terminus, the 199-residue chain is Recombination protein RecR (199 aa).

The segment at Cys-58–Cys-73 adopts a C4-type zinc-finger fold. A Toprim domain is found at His-81 to Pro-176.

This sequence belongs to the RecR family.

In terms of biological role, may play a role in DNA repair. It seems to be involved in an RecBC-independent recombinational process of DNA repair. It may act with RecF and RecO. This is Recombination protein RecR from Parvibaculum lavamentivorans (strain DS-1 / DSM 13023 / NCIMB 13966).